Here is a 189-residue protein sequence, read N- to C-terminus: Ras-like protein 1 (189 aa).

Residue 10-17 participates in GTP binding; sequence GAGGVGKS. Positions 32–40 match the Effector region motif; that stretch reads YDPTIEDSY. GTP contacts are provided by residues 57-61 and 116-119; these read DTAGQ and NKCD. Position 186 is a cysteine methyl ester (Cys186). Residue Cys186 is the site of S-geranylgeranyl cysteine attachment. Residues 187 to 189 constitute a propeptide, removed in mature form; that stretch reads KML.

It belongs to the small GTPase superfamily. Ras family.

It is found in the cell membrane. It catalyses the reaction GTP + H2O = GDP + phosphate + H(+). Its activity is regulated as follows. Alternates between an inactive form bound to GDP and an active form bound to GTP. Activated by a guanine nucleotide-exchange factor (GEF) and inactivated by a GTPase-activating protein (GAP). Its function is as follows. Ras proteins bind GDP/GTP and possess intrinsic GTPase activity. Plays a role in eye development by regulating cell growth, survival of postmitotic ommatidial cells and differentiation of photoreceptor cells. During larval development, mediates Ptth/tor signaling leading to the production of ecdysone, a hormone required for the initiation of metamorphosis. The protein is Ras-like protein 1 of Drosophila ananassae (Fruit fly).